The primary structure comprises 47 residues: uncharacterized protein (47 aa).

The helical transmembrane segment at 28–45 (VMIWGCLPYFLYVLIRMF) threads the bilayer.

The protein localises to the cell membrane. This is an uncharacterized protein from Bacillus subtilis (strain 168).